The sequence spans 140 residues: Profilin-1 (140 aa).

Position 2 is an N-acetylalanine (A2). A Phosphoserine modification is found at S28. A Glycyl lysine isopeptide (Lys-Gly) (interchain with G-Cter in SUMO2); alternate cross-link involves residue K54. K54 participates in a covalent cross-link: Glycyl lysine isopeptide (Lys-Gly) (interchain with G-Cter in ubiquitin); alternate. Phosphoserine is present on residues S57 and S85. 2 positions are modified to N6-acetyllysine: K105 and K108. Y129 is subject to Phosphotyrosine. Position 138 is a phosphoserine; by ROCK1 (S138).

This sequence belongs to the profilin family. Found in a complex with XPO6, Ran, ACTB and PFN1. Interacts with ACTB. Interacts with VASP. Interacts with HTT. Interacts with SH3BGRL. Occurs in many kinds of cells as a complex with monomeric actin in a 1:1 ratio. Interacts with ACTMAP. In terms of processing, phosphorylation at Ser-138 reduces its affinity for G-actin and blocks its interaction with HTT, reducing its ability to inhibit androgen receptor (AR) and HTT aggregation. As to expression, expressed in epididymis (at protein level).

The protein resides in the cytoplasm. Its subcellular location is the cytoskeleton. In terms of biological role, binds to actin and affects the structure of the cytoskeleton. At high concentrations, profilin prevents the polymerization of actin, whereas it enhances it at low concentrations. By binding to PIP2, it inhibits the formation of IP3 and DG. Inhibits androgen receptor (AR) and HTT aggregation and binding of G-actin is essential for its inhibition of AR. The polypeptide is Profilin-1 (PFN1) (Homo sapiens (Human)).